Reading from the N-terminus, the 514-residue chain is Histidine ammonia-lyase (514 aa).

Residues 142-144 (ASG) constitute a cross-link (5-imidazolinone (Ala-Gly)). 2,3-didehydroalanine (Ser) is present on Ser143.

The protein belongs to the PAL/histidase family. Post-translationally, contains an active site 4-methylidene-imidazol-5-one (MIO), which is formed autocatalytically by cyclization and dehydration of residues Ala-Ser-Gly.

The protein localises to the cytoplasm. It catalyses the reaction L-histidine = trans-urocanate + NH4(+). It functions in the pathway amino-acid degradation; L-histidine degradation into L-glutamate; N-formimidoyl-L-glutamate from L-histidine: step 1/3. The polypeptide is Histidine ammonia-lyase (Sorangium cellulosum (strain So ce56) (Polyangium cellulosum (strain So ce56))).